A 274-amino-acid polypeptide reads, in one-letter code: 4-hydroxy-tetrahydrodipicolinate reductase (274 aa).

Residues 8 to 13 (GALGRM), E34, 102 to 104 (GTT), and 128 to 131 (SQNF) contribute to the NAD(+) site. Residue H160 is the Proton donor/acceptor of the active site. H161 serves as a coordination point for (S)-2,3,4,5-tetrahydrodipicolinate. K164 functions as the Proton donor in the catalytic mechanism. Residue 170 to 171 (GT) participates in (S)-2,3,4,5-tetrahydrodipicolinate binding.

It belongs to the DapB family.

The protein localises to the cytoplasm. The catalysed reaction is (S)-2,3,4,5-tetrahydrodipicolinate + NAD(+) + H2O = (2S,4S)-4-hydroxy-2,3,4,5-tetrahydrodipicolinate + NADH + H(+). It catalyses the reaction (S)-2,3,4,5-tetrahydrodipicolinate + NADP(+) + H2O = (2S,4S)-4-hydroxy-2,3,4,5-tetrahydrodipicolinate + NADPH + H(+). The protein operates within amino-acid biosynthesis; L-lysine biosynthesis via DAP pathway; (S)-tetrahydrodipicolinate from L-aspartate: step 4/4. Its function is as follows. Catalyzes the conversion of 4-hydroxy-tetrahydrodipicolinate (HTPA) to tetrahydrodipicolinate. This is 4-hydroxy-tetrahydrodipicolinate reductase from Methanocaldococcus jannaschii (strain ATCC 43067 / DSM 2661 / JAL-1 / JCM 10045 / NBRC 100440) (Methanococcus jannaschii).